The sequence spans 151 residues: Ocs element-binding factor 1 (151 aa).

Residues 1-17 show a composition bias toward polar residues; it reads MSSSSLSPTAGRTSGSD. The tract at residues 1 to 47 is disordered; that stretch reads MSSSSLSPTAGRTSGSDGDSAADTHRREKRRLSNRESARRSRLRKQQ. The segment covering 22-39 has biased composition (basic and acidic residues); the sequence is ADTHRREKRRLSNRESAR. In terms of domain architecture, bZIP spans 24–87; it reads THRREKRRLS…TRVEQENTVL (64 aa). Positions 26-45 are basic motif; sequence RREKRRLSNRESARRSRLRK. The interval 52-59 is leucine-zipper; the sequence is LVQEVARL.

The protein belongs to the bZIP family. Roots and shoots of young plants, and basal portion of leaves.

Its subcellular location is the nucleus. May contribute to developmentally specific patterns of gene expression. Binds specifically to ocs elements which are transcriptional enhancer found in the promoters of several plant genes. OCSBF-1 is able to bind to a site within each half of the ocs element as well as to animal AP-1 and CREB sites. The chain is Ocs element-binding factor 1 (OBF1) from Zea mays (Maize).